A 510-amino-acid polypeptide reads, in one-letter code: Bifunctional purine biosynthesis protein PurH (510 aa).

The MGS-like domain maps to 1-145 (MTKRALLSVS…KNFAAVLPIV (145 aa)).

This sequence belongs to the PurH family.

The catalysed reaction is (6R)-10-formyltetrahydrofolate + 5-amino-1-(5-phospho-beta-D-ribosyl)imidazole-4-carboxamide = 5-formamido-1-(5-phospho-D-ribosyl)imidazole-4-carboxamide + (6S)-5,6,7,8-tetrahydrofolate. The enzyme catalyses IMP + H2O = 5-formamido-1-(5-phospho-D-ribosyl)imidazole-4-carboxamide. The protein operates within purine metabolism; IMP biosynthesis via de novo pathway; 5-formamido-1-(5-phospho-D-ribosyl)imidazole-4-carboxamide from 5-amino-1-(5-phospho-D-ribosyl)imidazole-4-carboxamide (10-formyl THF route): step 1/1. It participates in purine metabolism; IMP biosynthesis via de novo pathway; IMP from 5-formamido-1-(5-phospho-D-ribosyl)imidazole-4-carboxamide: step 1/1. This chain is Bifunctional purine biosynthesis protein PurH, found in Lactiplantibacillus plantarum (strain ATCC BAA-793 / NCIMB 8826 / WCFS1) (Lactobacillus plantarum).